A 329-amino-acid polypeptide reads, in one-letter code: N-acetyl-gamma-glutamyl-phosphate reductase (329 aa).

Residue cysteine 155 is part of the active site.

The protein belongs to the NAGSA dehydrogenase family. Type 1 subfamily.

It is found in the cytoplasm. The catalysed reaction is N-acetyl-L-glutamate 5-semialdehyde + phosphate + NADP(+) = N-acetyl-L-glutamyl 5-phosphate + NADPH + H(+). It functions in the pathway amino-acid biosynthesis; L-arginine biosynthesis; N(2)-acetyl-L-ornithine from L-glutamate: step 3/4. Its function is as follows. Catalyzes the NADPH-dependent reduction of N-acetyl-5-glutamyl phosphate to yield N-acetyl-L-glutamate 5-semialdehyde. The polypeptide is N-acetyl-gamma-glutamyl-phosphate reductase (Shewanella piezotolerans (strain WP3 / JCM 13877)).